The following is a 466-amino-acid chain: MEGKIIQVLGPVVDVEFESYLPAIFEALDINFEVNGVQKSLVLEVAAHLGGNRVRAIAMDMTEGLVRNQVVKARGKMIEVPVGEGVLGRIFNVVGESIDNLEPLKPSLIWPIHRKAPSFEQQSTKTEMFETGIKVIDLLAPYSKGGKVGLFGGAGVGKTVIIMELIHNVAYKHNGYSVFAGVGERTREGNDLYFEMKEGGVLDKVALCYGQMNEPPGARNRIAFTGLTMAEYFRDEKGLDVLMFIDNIFRYAQSGAEMSALLGRIPSAVGYQPTLAGEMGKLQERIASTKNGSITSVQAVYVPADDLTDPAPASVFAHLDATTVLNRKIAEKGIYPAVDPLDSTSRILSPQMIGEKHYEIATGIQQVLQKYKDLQDIIAILGLDELSEEDKKIVERARKIEKFLSQPFFVAEVFTGSPGKYVTLQETLEGFRGILEGKYDHIPENAFYMVGSIQEVLEKAKSMKNS.

An ATP-binding site is contributed by 152 to 159; it reads GGAGVGKT.

This sequence belongs to the ATPase alpha/beta chains family. F-type ATPases have 2 components, CF(1) - the catalytic core - and CF(0) - the membrane proton channel. CF(1) has five subunits: alpha(3), beta(3), gamma(1), delta(1), epsilon(1). CF(0) has three main subunits: a(1), b(2) and c(9-12). The alpha and beta chains form an alternating ring which encloses part of the gamma chain. CF(1) is attached to CF(0) by a central stalk formed by the gamma and epsilon chains, while a peripheral stalk is formed by the delta and b chains.

Its subcellular location is the cell inner membrane. It catalyses the reaction ATP + H2O + 4 H(+)(in) = ADP + phosphate + 5 H(+)(out). Produces ATP from ADP in the presence of a proton gradient across the membrane. The catalytic sites are hosted primarily by the beta subunits. The sequence is that of ATP synthase subunit beta from Helicobacter acinonychis (strain Sheeba).